The chain runs to 461 residues: Divalent metal cation transporter MntH (461 aa).

11 consecutive transmembrane segments (helical) span residues 56–76 (AMAF…PGNW), 89–109 (TLLA…SLCA), 132–152 (AMVL…AEVI), 160–180 (LIFG…VFLI), 193–213 (ALVI…LALA), 230–250 (IVTN…TVMP), 285–305 (IALM…AATF), 322–342 (LLAP…ALLC), 378–398 (AIAI…GTGQ), 399–419 (LLIL…FPLV), and 433–453 (SPLW…ALNV).

It belongs to the NRAMP family.

The protein resides in the cell inner membrane. H(+)-stimulated, divalent metal cation uptake system. This Agrobacterium fabrum (strain C58 / ATCC 33970) (Agrobacterium tumefaciens (strain C58)) protein is Divalent metal cation transporter MntH.